A 475-amino-acid polypeptide reads, in one-letter code: Cysteine--tRNA ligase (475 aa).

Zn(2+) is bound at residue Cys-28. The 'HIGH' region motif lies at 30-40; it reads PTVYDYAHIGN. Zn(2+) is bound by residues Cys-213, His-238, and Glu-242. Positions 270-274 match the 'KMSKS' region motif; it reads KMSKS. Residue Lys-273 coordinates ATP.

This sequence belongs to the class-I aminoacyl-tRNA synthetase family. In terms of assembly, monomer. Zn(2+) is required as a cofactor.

The protein resides in the cytoplasm. The enzyme catalyses tRNA(Cys) + L-cysteine + ATP = L-cysteinyl-tRNA(Cys) + AMP + diphosphate. The sequence is that of Cysteine--tRNA ligase (cysS) from Chlamydia muridarum (strain MoPn / Nigg).